Reading from the N-terminus, the 367-residue chain is Glutamate 5-kinase (367 aa).

An ATP-binding site is contributed by lysine 10. Substrate contacts are provided by serine 50, aspartate 137, and asparagine 149. ATP contacts are provided by residues 169 to 170 and 211 to 217; these read TD and TGGMGTK. The PUA domain occupies 275–353; the sequence is AGELTVDAGA…QQIDAILGYE (79 aa).

It belongs to the glutamate 5-kinase family.

The protein resides in the cytoplasm. The enzyme catalyses L-glutamate + ATP = L-glutamyl 5-phosphate + ADP. It participates in amino-acid biosynthesis; L-proline biosynthesis; L-glutamate 5-semialdehyde from L-glutamate: step 1/2. In terms of biological role, catalyzes the transfer of a phosphate group to glutamate to form L-glutamate 5-phosphate. The protein is Glutamate 5-kinase of Klebsiella pneumoniae (strain 342).